Reading from the N-terminus, the 71-residue chain is Sec-independent protein translocase protein TatA (71 aa).

The chain crosses the membrane as a helical span at residues 1–21 (MGSFSMGHWLIVLAIIVLLFG). The span at 41-57 (KEMEDETPVEKIEKADS) shows a compositional bias: basic and acidic residues. Positions 41–71 (KEMEDETPVEKIEKADSETQSTKQNETTKNV) are disordered. The span at 58-71 (ETQSTKQNETTKNV) shows a compositional bias: polar residues.

It belongs to the TatA/E family. The Tat system comprises two distinct complexes: a TatABC complex, containing multiple copies of TatA, TatB and TatC subunits, and a separate TatA complex, containing only TatA subunits. Substrates initially bind to the TatABC complex, which probably triggers association of the separate TatA complex to form the active translocon.

Its subcellular location is the cell inner membrane. In terms of biological role, part of the twin-arginine translocation (Tat) system that transports large folded proteins containing a characteristic twin-arginine motif in their signal peptide across membranes. TatA could form the protein-conducting channel of the Tat system. This chain is Sec-independent protein translocase protein TatA, found in Campylobacter fetus subsp. fetus (strain 82-40).